The sequence spans 503 residues: Maturase K (503 aa).

The protein belongs to the intron maturase 2 family. MatK subfamily.

It localises to the plastid. Its subcellular location is the chloroplast. Functionally, usually encoded in the trnK tRNA gene intron. Probably assists in splicing its own and other chloroplast group II introns. The sequence is that of Maturase K from Syzygium australe (Brush cherry).